We begin with the raw amino-acid sequence, 312 residues long: D-alanine--D-alanine ligase (312 aa).

An ATP-grasp domain is found at 103-303; sequence KQQLVPHGIR…YADLVQAIVD (201 aa). Residue 130–186 coordinates ATP; it reads MPRPYVLKPVNEGSSVGVAIIKERDNHGVPIHRDSHGPWQTFATLLAEPFIRGRELT. Mg(2+) is bound by residues Asp254, Glu270, and Asn272.

Belongs to the D-alanine--D-alanine ligase family. Mg(2+) serves as cofactor. It depends on Mn(2+) as a cofactor.

It localises to the cytoplasm. It carries out the reaction 2 D-alanine + ATP = D-alanyl-D-alanine + ADP + phosphate + H(+). It participates in cell wall biogenesis; peptidoglycan biosynthesis. Its function is as follows. Cell wall formation. The chain is D-alanine--D-alanine ligase from Rhizorhabdus wittichii (strain DSM 6014 / CCUG 31198 / JCM 15750 / NBRC 105917 / EY 4224 / RW1) (Sphingomonas wittichii).